Reading from the N-terminus, the 187-residue chain is Elongation factor P (187 aa).

Belongs to the elongation factor P family.

It localises to the cytoplasm. The protein operates within protein biosynthesis; polypeptide chain elongation. Functionally, involved in peptide bond synthesis. Stimulates efficient translation and peptide-bond synthesis on native or reconstituted 70S ribosomes in vitro. Probably functions indirectly by altering the affinity of the ribosome for aminoacyl-tRNA, thus increasing their reactivity as acceptors for peptidyl transferase. The protein is Elongation factor P of Helicobacter pylori (strain P12).